An 83-amino-acid chain; its full sequence is RNA-binding protein Hfq (83 aa).

The Sm domain occupies aspartate 11 to valine 71.

Belongs to the Hfq family. Homohexamer.

Its function is as follows. RNA chaperone that binds small regulatory RNA (sRNAs) and mRNAs to facilitate mRNA translational regulation in response to envelope stress, environmental stress and changes in metabolite concentrations. Also binds with high specificity to tRNAs. The chain is RNA-binding protein Hfq from Methylobacterium radiotolerans (strain ATCC 27329 / DSM 1819 / JCM 2831 / NBRC 15690 / NCIMB 10815 / 0-1).